An 823-amino-acid polypeptide reads, in one-letter code: MAPTTGPRNTKNAKPAVQRSKTLKRKRGQEELSSLIQRVEGLDLKESFESFSDLPLSEPTLSGLTSSHFKTLTDIQSRAISHALKGRDVLGAAKTGSGKTLAFLVPVLENLYRRQWAEHDGLGALILSPTRELAIQIFEVLRKIGRYHTFSAGLVIGGKSLREEQERLGRMNILVCTPGRMLQHLDQTALFDTYNLQMLVLDEADRILDLGFQQTVDAIVGHLPKERQTLLFSATQTKKVSDLARLSLRDPEYVAVHETASTATPAKLQQHYVIAPLPQKLDILWSFIRSNLKSKTMVFFSSGKQVRFVYESFRHMQPGIPLMHLHGRQKQGGRLDIMTNFSQAKHCVLFSTDVAARGLDFPAVDWVIQMDCPEDADTYIHRVGRTARYGRDGRAVLFLDPSEEEGMLKRLEQKKVPIEKINIKANKQQSIKDQLQNMCFKDPELKYIGQKAFISYVKSVYIQKDKEIFKLKELKLDEFASSLGLPGAPRIKFIKGDDTKQRKNAPRAAAHLSSDDEAGSDAEEGEPKTKKKEEPQVRTKYDRMFERRNQDVLAEHYSKLINDDGTMVAPPNAGAGADADEDDDFLSVKRRFDVGDETLGMSSDDSDEEDDDDDETSPKKETKVVHIDGKEALVIDSKRREKLLKSKKKLLKFKGKGTKLVYDDEGNAHEVYELEDEDQFKARGDAKEQKAKFLEEEAERTRLADLEDKEIAKQKRREKKEKRKARERELLAEAEDEEETVVQLPPYEGDHDMDGGFSASEEEEEAARPSKKPKVKFAEPDESDKGSEPWYKKSKRTDDKGGSQAPQIQTLEDLESLASGLLG.

Over residues 1 to 12 (MAPTTGPRNTKN) the composition is skewed to polar residues. A disordered region spans residues 1 to 30 (MAPTTGPRNTKNAKPAVQRSKTLKRKRGQE). The Q motif signature appears at 49–77 (ESFSDLPLSEPTLSGLTSSHFKTLTDIQS). The 175-residue stretch at 80 to 254 (ISHALKGRDV…RLSLRDPEYV (175 aa)) folds into the Helicase ATP-binding domain. 93–100 (AKTGSGKT) contacts ATP. The DEAD box motif lies at 202 to 205 (DEAD). A Helicase C-terminal domain is found at 280–439 (KLDILWSFIR…SIKDQLQNMC (160 aa)). Disordered stretches follow at residues 494–545 (IKGD…DRMF), 563–625 (DDGT…TKVV), and 702–823 (RLAD…GLLG). Residues 515–524 (DDEAGSDAEE) show a composition bias toward acidic residues. The segment covering 525-545 (GEPKTKKKEEPQVRTKYDRMF) has biased composition (basic and acidic residues). A compositionally biased stretch (acidic residues) spans 604-615 (DDSDEEDDDDDE). Basic and acidic residues-rich tracts occupy residues 616-625 (TSPKKETKVV) and 702-713 (RLADLEDKEIAK). Over residues 714–723 (QKRREKKEKR) the composition is skewed to basic residues. Residues 776-801 (KFAEPDESDKGSEPWYKKSKRTDDKG) show a composition bias toward basic and acidic residues.

This sequence belongs to the DEAD box helicase family. DDX10/DBP4 subfamily. In terms of assembly, interacts with the U3 and U14 snoRNAs. Associates with pre-ribosomal complexes.

It localises to the nucleus. The protein localises to the nucleolus. The catalysed reaction is ATP + H2O = ADP + phosphate + H(+). ATP-dependent RNA helicase required for ribosome biogenesis. Involved in the release of U14 snoRNA in pre-ribosomal complexes. Required for pre-rRNA cleavage at site A2. This chain is ATP-dependent RNA helicase dbp4 (dbp4), found in Aspergillus clavatus (strain ATCC 1007 / CBS 513.65 / DSM 816 / NCTC 3887 / NRRL 1 / QM 1276 / 107).